A 431-amino-acid polypeptide reads, in one-letter code: Protein CLT2, chloroplastic (431 aa).

The N-terminal 79 residues, 1–79 (MDTVLMATTP…PMRRPRFSVG (79 aa)), are a transit peptide targeting the chloroplast. Transmembrane regions (helical) follow at residues 99–119 (VVIVALAVANRVLYKLALVPM), 122–142 (YPFFMAQLTTFGYVLIYFTIL), 163–183 (FAIIGFLEALGVATGMAAAAM), 188–208 (VIPILNQTYLVWQLLFALLIL), 212–232 (FLLNQIAGCLLVAVGVVVAVS), 244–264 (IGFLWPAVLVASAAFQAGASI), 284–304 (IFVVNSFGSGFQALFVFLLLP), 343–363 (ILPLLYISTNLAFNISLLHLV), 365–385 (ISSAIVSSLTMMLSVPLAVYI), and 403–423 (FTMGCIVLVLGLLLYNIPTTP).

It belongs to the CRT-like transporter family.

It localises to the plastid. Its subcellular location is the chloroplast membrane. Its function is as follows. Involved in thiol transport from the plastid to the cytosol. Transports probably both glutathione (GSH) and its precursor, gamma-glutamylcysteine (gamma-EC). This Arabidopsis thaliana (Mouse-ear cress) protein is Protein CLT2, chloroplastic.